The chain runs to 376 residues: Inactive 2'-5'-oligoadenylate synthase 1B (376 aa).

Residues 1 to 351 (MEQDLRSIPA…VPTEVGVPMK (351 aa)) lie on the Cytoplasmic side of the membrane. The chain crosses the membrane as a helical; Anchor for type IV membrane protein span at residues 352-370 (YLLCRIFWLLFWSLFHFIF). Over 371–376 (GKTSSG) the chain is Extracellular.

It belongs to the 2-5A synthase family. In terms of assembly, interacts with OSBPL1A and ABCF3. Highly expressed in lung, spleen and thymus. Also detected at lower levels in heart, kidney, liver, lung, skeletal muscle, testes, uterus and ovaries.

Its subcellular location is the endoplasmic reticulum membrane. Functionally, does not have 2'-5'-OAS activity, but can bind double-stranded RNA. The full-length protein displays antiviral activity against flaviviruses such as west Nile virus (WNV) via an alternative antiviral pathway independent of RNase L. The truncated form of the protein lacks antiviral activity. This chain is Inactive 2'-5'-oligoadenylate synthase 1B (Oas1b), found in Mus musculus (Mouse).